Here is a 556-residue protein sequence, read N- to C-terminus: Formate--tetrahydrofolate ligase (556 aa).

An ATP-binding site is contributed by 65 to 72; it reads TPAGEGKS.

It belongs to the formate--tetrahydrofolate ligase family.

It carries out the reaction (6S)-5,6,7,8-tetrahydrofolate + formate + ATP = (6R)-10-formyltetrahydrofolate + ADP + phosphate. The protein operates within one-carbon metabolism; tetrahydrofolate interconversion. This chain is Formate--tetrahydrofolate ligase, found in Streptococcus pneumoniae (strain 70585).